A 246-amino-acid polypeptide reads, in one-letter code: tRNA (guanine-N(1)-)-methyltransferase (246 aa).

S-adenosyl-L-methionine is bound by residues glycine 113 and 133-138 (IGDYVL).

This sequence belongs to the RNA methyltransferase TrmD family. As to quaternary structure, homodimer.

It is found in the cytoplasm. It carries out the reaction guanosine(37) in tRNA + S-adenosyl-L-methionine = N(1)-methylguanosine(37) in tRNA + S-adenosyl-L-homocysteine + H(+). Specifically methylates guanosine-37 in various tRNAs. The protein is tRNA (guanine-N(1)-)-methyltransferase of Yersinia enterocolitica serotype O:8 / biotype 1B (strain NCTC 13174 / 8081).